The following is a 253-amino-acid chain: CD151 antigen (253 aa).

Over 1-18 (MGEFNEKKTTCGTVCLKY) the chain is Cytoplasmic. 2 S-palmitoyl cysteine lipidation sites follow: C11 and C15. A helical transmembrane segment spans residues 19-39 (LLFTYNCCFWLAGLAVMAVGI). At 40 to 57 (WTLALKSDYISLLASGTY) the chain is on the extracellular side. The chain crosses the membrane as a helical span at residues 58–78 (LATAYILVVAGAVVMVTGVLG). At 79 to 91 (CCATFKERRNLLR) the chain is on the cytoplasmic side. A helical transmembrane segment spans residues 92-112 (LYFILLLIIFLLEIIAGVLAY). Residues 113–221 (VYYQQLNTEL…LETFIQEHLR (109 aa)) lie on the Extracellular side of the membrane. N159 is a glycosylation site (N-linked (GlcNAc...) asparagine). Residues 222-242 (VIGAVGTGIACVQVFGMIFTC) form a helical membrane-spanning segment. S-palmitoyl cysteine attachment occurs at residues C242 and C243. Residues 243–253 (CLYRSLKLEHY) are Cytoplasmic-facing.

Belongs to the tetraspanin (TM4SF) family. As to quaternary structure, interacts with integrins ITGA3:ITGB1, ITGA5:ITGB1, ITGA3:ITGB1 and ITGA6:ITGB4 and with CD9 and CD181. Interacts (via the second extracellular domain) with integrin ITGAV:ITGB3. Interacts with ITGA3; this interaction modulates ITGA3 glycosylation pattern. Interacts with F11R. Interacts with RAC1 and CDC42; these interactions mediate physical association of RAC1 and CDC42 with integrin adhesion receptor complexes. Post-translationally, palmitoylated. Palmitoylation by ZDHHC2 regulates CD151 expression, association with other tetraspanin family proteins and function in cell adhesion. Ubiquitinated by RNF128 on lysine residues present in the tetraspanin amino terminus via 'Lys-48'-linked ubiquitin leading to proteasomal degradation.

It localises to the cell membrane. Its function is as follows. Structural component of specialized membrane microdomains known as tetraspanin-enriched microdomains (TERMs), which act as platforms for receptor clustering and signaling. Plays a role in various cellular and molecular mechanism through its association with both integrin and non-integrin proteins. These interactions facilitate critical cellular functions, including cell-to-cell communication, wound healing, platelet aggregation, trafficking, cell motility, and angiogenesis. Via interaction with JAM-A/F11R and integrin ITGA3:ITGB1, promotes the recruitment of signaling molecules such as RAC1, CDC42 and RhoGTPases to facilitate the polarization of epithelial cells and the reorganization of the actin cytoskeleton, which are critical steps in cell migration process. Regulates the glycosylation pattern of ITGA3:ITGB1 thereby modulating its activity. Plays an essential role in the maintenance of central laminin-binding integrin ITGA6:ITGB4-containing adhesion complexes. Essential for the proper assembly of the glomerular and tubular basement membranes in kidney. Contributes to T-cell activation by modulating integrin signaling leading to activation of downstream targets PTK2 and MAPK1/MAPK3. The protein is CD151 antigen (CD151) of Chlorocebus aethiops (Green monkey).